The following is a 149-amino-acid chain: Protein SprT-like (149 aa).

In terms of domain architecture, SprT-like spans 4–143; it reads TDYVKQVSLE…CGLCRGKLLL (140 aa). A Zn(2+)-binding site is contributed by His-64. Glu-65 is an active-site residue. His-68 serves as a coordination point for Zn(2+).

The protein belongs to the SprT family. It depends on Zn(2+) as a cofactor.

It localises to the cytoplasm. This Streptococcus pneumoniae (strain Taiwan19F-14) protein is Protein SprT-like.